Consider the following 212-residue polypeptide: Nuclear transcription factor Y subunit C-7 (212 aa).

Residues 1-10 are compositionally biased toward polar residues; the sequence is MEENNGNNNH. 2 disordered regions span residues 1-23 and 190-212; these read MEEN…LPPP and EWPA…SGGN.

This sequence belongs to the NFYC/HAP5 subunit family. In terms of assembly, heterotrimeric transcription factor composed of three components, NF-YA, NF-YB and NF-YC. NF-YB and NF-YC must interact and dimerize for NF-YA association and DNA binding. In terms of tissue distribution, expressed in flowers.

It localises to the nucleus. In terms of biological role, stimulates the transcription of various genes by recognizing and binding to a CCAAT motif in promoters. This is Nuclear transcription factor Y subunit C-7 (NFYC7) from Arabidopsis thaliana (Mouse-ear cress).